The primary structure comprises 286 residues: Protein NipSnap homolog 2 (286 aa).

Residues M1 to P23 constitute a mitochondrion transit peptide.

This sequence belongs to the NipSnap family. As to quaternary structure, interacts with CALCOCO2/NDP52, NBR1, SQSTM1/p62, TAX1BP1 and WDFY3/ALFY. Interacts with ATG8 family proteins (MAP1LC3A, MAP1LC3B, MAP1LC3C, GABARAP, GABARAPL1 and GABARAPL2). Interacts with VDAC1. In terms of tissue distribution, widely expressed. Most abundant in heart and skeletal muscle.

The protein resides in the mitochondrion matrix. Its function is as follows. Protein involved in mitophagy by facilitating recruitment of the autophagy machinery required for clearance of damaged mitochondria. Accumulates on the mitochondria surface in response to mitochondrial depolarization and acts as a 'eat me' signal by recruiting proteins involved in selective autophagy, such as autophagy receptors (CALCOCO2/NDP52, NBR1, SQSTM1/p62, TAX1BP1 and WDFY3/ALFY) and ATG8 family proteins (MAP1LC3A, MAP1LC3B, MAP1LC3C, GABARAP, GABARAPL1 and GABARAPL2). This chain is Protein NipSnap homolog 2, found in Homo sapiens (Human).